A 164-amino-acid chain; its full sequence is MRALGIDPGTATMGWGVVERDGGVLRLVDVGALTTPAGMPQPERLLQLYNGLRAIIERLQPDTAAVEELFFGKNVNTALTVGQARGVALLALAQAGIPVYEYKPTAVKQAVAGYGGADKRQMQEMVRLTLGLATVPRPDDAADALAIAICHAYTAPTLQRFGVS.

Active-site residues include Asp-7, Glu-67, and Asp-140. Residues Asp-7, Glu-67, and Asp-140 each contribute to the Mg(2+) site.

Belongs to the RuvC family. Homodimer which binds Holliday junction (HJ) DNA. The HJ becomes 2-fold symmetrical on binding to RuvC with unstacked arms; it has a different conformation from HJ DNA in complex with RuvA. In the full resolvosome a probable DNA-RuvA(4)-RuvB(12)-RuvC(2) complex forms which resolves the HJ. It depends on Mg(2+) as a cofactor.

It localises to the cytoplasm. It carries out the reaction Endonucleolytic cleavage at a junction such as a reciprocal single-stranded crossover between two homologous DNA duplexes (Holliday junction).. Functionally, the RuvA-RuvB-RuvC complex processes Holliday junction (HJ) DNA during genetic recombination and DNA repair. Endonuclease that resolves HJ intermediates. Cleaves cruciform DNA by making single-stranded nicks across the HJ at symmetrical positions within the homologous arms, yielding a 5'-phosphate and a 3'-hydroxyl group; requires a central core of homology in the junction. The consensus cleavage sequence is 5'-(A/T)TT(C/G)-3'. Cleavage occurs on the 3'-side of the TT dinucleotide at the point of strand exchange. HJ branch migration catalyzed by RuvA-RuvB allows RuvC to scan DNA until it finds its consensus sequence, where it cleaves and resolves the cruciform DNA. The polypeptide is Crossover junction endodeoxyribonuclease RuvC (Chloroflexus aggregans (strain MD-66 / DSM 9485)).